A 341-amino-acid chain; its full sequence is Thromboxane A2 receptor (341 aa).

Over 1–29 (MWPNGTSLGACFRPVNITLQERRAIASPW) the chain is Extracellular. N-linked (GlcNAc...) asparagine glycosylation is found at N4 and N16. Residues 30-52 (FAASFCALGLGSNLLALSVLAGA) form a helical membrane-spanning segment. Residues 53–65 (RPGAGPRSSFLAL) are Cytoplasmic-facing. Residues 66 to 86 (LCGLVLTDFLGLLVTGAIVAS) traverse the membrane as a helical segment. Over 87-105 (QHAALLDWRATDPSCRLCY) the chain is Extracellular. Cysteines 104 and 181 form a disulfide. The helical transmembrane segment at 106-127 (FMGVAMVFFGLCPLLLGAAMAS) threads the bilayer. The Cytoplasmic segment spans residues 128–147 (ERFVGITRPFSRPTATSRRA). Residues 148-170 (WATVGLVWVAAGALGLLPLLGLG) traverse the membrane as a helical segment. The Extracellular segment spans residues 171-191 (RYSVQYPGSWCFLTLGTQRGD). Residues 192 to 217 (VVFGLIFALLGSASVGLSLLLNTVSV) form a helical membrane-spanning segment. Residues 218 to 244 (ATLCRVYHTREATQRPRDCEVEMMVQL) are Cytoplasmic-facing. Residues 245–268 (VGIMVVATVCWMPLLVFIMQTLLQ) traverse the membrane as a helical segment. Topologically, residues 269 to 287 (TPPVMSFSGQLLRATEHQL) are extracellular. A helical transmembrane segment spans residues 288–309 (LIYLRVATWNQILDPWVYILFR). The Cytoplasmic portion of the chain corresponds to 310–341 (RSVLRRLHPRFSSQLQAVSLRRPPAQAMLSGP). S328 carries the phosphoserine modification.

Belongs to the G-protein coupled receptor 1 family. As to quaternary structure, interacts with RPGRIP1L. Interacts with RACK1; the interaction regulates TBXA2R cell surface expression.

It is found in the cell membrane. Receptor for thromboxane A2 (TXA2), a potent stimulator of platelet aggregation. The activity of this receptor is mediated by a G-protein that activates a phosphatidylinositol-calcium second messenger system. In the kidney, the binding of TXA2 to glomerular TP receptors causes intense vasoconstriction. Activates phospholipase C and adenylyl cyclase. This chain is Thromboxane A2 receptor (Tbxa2r), found in Mus musculus (Mouse).